The chain runs to 428 residues: Adenylosuccinate synthetase (428 aa).

GTP is bound by residues 12–18 (GDEGKGK) and 40–42 (GHS). Residue Asp13 is the Proton acceptor of the active site. Residues Asp13 and Gly40 each coordinate Mg(2+). IMP is bound by residues 13 to 16 (DEGK), 38 to 41 (NAGH), Thr128, Arg142, Gln223, Thr238, and Arg302. His41 acts as the Proton donor in catalysis. 298–304 (VTTGRPR) provides a ligand contact to substrate. Residues Arg304, 330–332 (KLD), and 412–414 (GTG) each bind GTP.

Belongs to the adenylosuccinate synthetase family. Homodimer. Mg(2+) serves as cofactor.

It localises to the cytoplasm. It carries out the reaction IMP + L-aspartate + GTP = N(6)-(1,2-dicarboxyethyl)-AMP + GDP + phosphate + 2 H(+). Its pathway is purine metabolism; AMP biosynthesis via de novo pathway; AMP from IMP: step 1/2. Its function is as follows. Plays an important role in the de novo pathway of purine nucleotide biosynthesis. Catalyzes the first committed step in the biosynthesis of AMP from IMP. In Bifidobacterium longum (strain NCC 2705), this protein is Adenylosuccinate synthetase.